A 911-amino-acid polypeptide reads, in one-letter code: Valine--tRNA ligase (911 aa).

Positions 57–67 (PTVSGSLHVGH) match the 'HIGH' region motif. Residues 599 to 603 (KMSKS) carry the 'KMSKS' region motif. Residue K602 coordinates ATP. The tract at residues 882-911 (EESAAEDAPETEVAVEASELGEPPAKKPKH) is disordered.

It belongs to the class-I aminoacyl-tRNA synthetase family. ValS type 2 subfamily. As to quaternary structure, monomer.

Its subcellular location is the cytoplasm. It catalyses the reaction tRNA(Val) + L-valine + ATP = L-valyl-tRNA(Val) + AMP + diphosphate. Functionally, catalyzes the attachment of valine to tRNA(Val). As ValRS can inadvertently accommodate and process structurally similar amino acids such as threonine, to avoid such errors, it has a 'posttransfer' editing activity that hydrolyzes mischarged Thr-tRNA(Val) in a tRNA-dependent manner. The protein is Valine--tRNA ligase of Bifidobacterium longum (strain DJO10A).